The chain runs to 163 residues: Small ribosomal subunit protein uS5 (163 aa).

In terms of domain architecture, S5 DRBM spans 8–71; that stretch reads FIEKVVSLNR…EQARKAMMKI (64 aa).

It belongs to the universal ribosomal protein uS5 family. As to quaternary structure, part of the 30S ribosomal subunit. Contacts proteins S4 and S8.

With S4 and S12 plays an important role in translational accuracy. Functionally, located at the back of the 30S subunit body where it stabilizes the conformation of the head with respect to the body. The polypeptide is Small ribosomal subunit protein uS5 (Lawsonia intracellularis (strain PHE/MN1-00)).